The chain runs to 349 residues: N-acetyl-gamma-glutamyl-phosphate reductase (349 aa).

Cysteine 149 is an active-site residue.

The protein belongs to the NAGSA dehydrogenase family. Type 1 subfamily.

It localises to the cytoplasm. It carries out the reaction N-acetyl-L-glutamate 5-semialdehyde + phosphate + NADP(+) = N-acetyl-L-glutamyl 5-phosphate + NADPH + H(+). It functions in the pathway amino-acid biosynthesis; L-arginine biosynthesis; N(2)-acetyl-L-ornithine from L-glutamate: step 3/4. Functionally, catalyzes the NADPH-dependent reduction of N-acetyl-5-glutamyl phosphate to yield N-acetyl-L-glutamate 5-semialdehyde. In Acinetobacter baumannii (strain SDF), this protein is N-acetyl-gamma-glutamyl-phosphate reductase.